A 180-amino-acid chain; its full sequence is ATP synthase subunit delta (180 aa).

It belongs to the ATPase delta chain family. As to quaternary structure, F-type ATPases have 2 components, F(1) - the catalytic core - and F(0) - the membrane proton channel. F(1) has five subunits: alpha(3), beta(3), gamma(1), delta(1), epsilon(1). F(0) has three main subunits: a(1), b(2) and c(10-14). The alpha and beta chains form an alternating ring which encloses part of the gamma chain. F(1) is attached to F(0) by a central stalk formed by the gamma and epsilon chains, while a peripheral stalk is formed by the delta and b chains.

It is found in the cell membrane. In terms of biological role, f(1)F(0) ATP synthase produces ATP from ADP in the presence of a proton or sodium gradient. F-type ATPases consist of two structural domains, F(1) containing the extramembraneous catalytic core and F(0) containing the membrane proton channel, linked together by a central stalk and a peripheral stalk. During catalysis, ATP synthesis in the catalytic domain of F(1) is coupled via a rotary mechanism of the central stalk subunits to proton translocation. Its function is as follows. This protein is part of the stalk that links CF(0) to CF(1). It either transmits conformational changes from CF(0) to CF(1) or is implicated in proton conduction. The sequence is that of ATP synthase subunit delta from Alkaliphilus oremlandii (strain OhILAs) (Clostridium oremlandii (strain OhILAs)).